The primary structure comprises 101 residues: Protein Tat (101 aa).

An interaction with human CREBBP region spans residues 1–24; that stretch reads MEPIDPNLEPWNHPGSQPKTACNN. Residues 1 to 48 are transactivation; that stretch reads MEPIDPNLEPWNHPGSQPKTACNNCYCKQCCYHCQLCFTKKGLGISYG. Residues cysteine 22, cysteine 25, and cysteine 27 each contribute to the Zn(2+) site. The segment at 22 to 37 is cysteine-rich; sequence CNNCYCKQCCYHCQLC. At lysine 28 the chain carries N6-acetyllysine; by host PCAF. Cysteine 30, histidine 33, cysteine 34, and cysteine 37 together coordinate Zn(2+). Residues 38-48 are core; sequence FTKKGLGISYG. A disordered region spans residues 48–101; the sequence is GRRKRKQRRRTSESSQNHQDPVPKQPLSQPGGIETGQKKSKKEVESQTTSDQFA. The Nuclear localization signal, RNA-binding (TAR), and protein transduction signature appears at 49–57; that stretch reads RRKRKQRRR. The segment at 49–86 is interaction with the host capping enzyme RNGTT; the sequence is RRKRKQRRRTSESSQNHQDPVPKQPLSQPGGIETGQKK. An N6-acetyllysine; by host EP300 and GCN5L2 modification is found at lysine 51. An Asymmetric dimethylarginine; by host PRMT6 modification is found at arginine 52. Residue lysine 71 forms a Glycyl lysine isopeptide (Lys-Gly) (interchain with G-Cter in ubiquitin) linkage.

The protein belongs to the lentiviruses Tat family. In terms of assembly, interacts with host CCNT1. Associates with the P-TEFb complex composed at least of Tat, P-TEFb (CDK9 and CCNT1), TAR RNA, RNA Pol II. Recruits the HATs CREBBP, TAF1/TFIID, EP300, PCAF and GCN5L2. Interacts with host KAT5/Tip60; this interaction targets the latter to degradation. Interacts with the host deacetylase SIRT1. Interacts with host capping enzyme RNGTT; this interaction stimulates RNGTT. Binds to host KDR, and to the host integrins ITGAV/ITGB3 and ITGA5/ITGB1. Interacts with host KPNB1/importin beta-1 without previous binding to KPNA1/importin alpha-1. Interacts with EIF2AK2. Interacts with host nucleosome assembly protein NAP1L1; this interaction may be required for the transport of Tat within the nucleus, since the two proteins interact at the nuclear rim. Interacts with host C1QBP/SF2P32; this interaction involves lysine-acetylated Tat. Interacts with the host chemokine receptors CCR2, CCR3 and CXCR4. Interacts with host DPP4/CD26; this interaction may trigger an anti-proliferative effect. Interacts with host LDLR. Interacts with the host extracellular matrix metalloproteinase MMP1. Interacts with host PRMT6; this interaction mediates Tat's methylation. Interacts with, and is ubiquitinated by MDM2/Hdm2. Interacts with host PSMC3 and HTATIP2. Interacts with STAB1; this interaction may overcome SATB1-mediated repression of IL2 and IL2RA (interleukin) in T cells by binding to the same domain than HDAC1. Interacts (when acetylated) with human CDK13, thereby increasing HIV-1 mRNA splicing and promoting the production of the doubly spliced HIV-1 protein Nef. Interacts with host TBP; this interaction modulates the activity of transcriptional pre-initiation complex. Interacts with host RELA. Post-translationally, asymmetrical arginine methylation by host PRMT6 seems to diminish the transactivation capacity of Tat and affects the interaction with host CCNT1. In terms of processing, polyubiquitination by host MDM2 does not target Tat to degradation, but activates its transactivation function and fosters interaction with CCNT1 and TAR RNA. Phosphorylated by EIF2AK2 on serine and threonine residues adjacent to the basic region important for TAR RNA binding and function. Phosphorylation of Tat by EIF2AK2 is dependent on the prior activation of EIF2AK2 by dsRNA.

It is found in the host nucleus. It localises to the host nucleolus. Its subcellular location is the host cytoplasm. The protein resides in the secreted. Functionally, transcriptional activator that increases RNA Pol II processivity, thereby increasing the level of full-length viral transcripts. Recognizes a hairpin structure at the 5'-LTR of the nascent viral mRNAs referred to as the transactivation responsive RNA element (TAR) and recruits the cyclin T1-CDK9 complex (P-TEFb complex) that will in turn hyperphosphorylate the RNA polymerase II to allow efficient elongation. The CDK9 component of P-TEFb and other Tat-activated kinases hyperphosphorylate the C-terminus of RNA Pol II that becomes stabilized and much more processive. Other factors such as HTATSF1/Tat-SF1, SUPT5H/SPT5, and HTATIP2 are also important for Tat's function. Besides its effect on RNA Pol II processivity, Tat induces chromatin remodeling of proviral genes by recruiting the histone acetyltransferases (HATs) CREBBP, EP300 and PCAF to the chromatin. This also contributes to the increase in proviral transcription rate, especially when the provirus integrates in transcriptionally silent region of the host genome. To ensure maximal activation of the LTR, Tat mediates nuclear translocation of NF-kappa-B by interacting with host RELA. Through its interaction with host TBP, Tat may also modulate transcription initiation. Tat can reactivate a latently infected cell by penetrating in it and transactivating its LTR promoter. In the cytoplasm, Tat is thought to act as a translational activator of HIV-1 mRNAs. In terms of biological role, extracellular circulating Tat can be endocytosed by surrounding uninfected cells via the binding to several surface receptors such as CD26, CXCR4, heparan sulfate proteoglycans (HSPG) or LDLR. Neurons are rarely infected, but they internalize Tat via their LDLR. Through its interaction with nuclear HATs, Tat is potentially able to control the acetylation-dependent cellular gene expression. Modulates the expression of many cellular genes involved in cell survival, proliferation or in coding for cytokines or cytokine receptors. Tat plays a role in T-cell and neurons apoptosis. Tat induced neurotoxicity and apoptosis probably contribute to neuroAIDS. Circulating Tat also acts as a chemokine-like and/or growth factor-like molecule that binds to specific receptors on the surface of the cells, affecting many cellular pathways. In the vascular system, Tat binds to ITGAV/ITGB3 and ITGA5/ITGB1 integrins dimers at the surface of endothelial cells and competes with bFGF for heparin-binding sites, leading to an excess of soluble bFGF. The protein is Protein Tat of Pan troglodytes (Chimpanzee).